The primary structure comprises 818 residues: Structure-specific endonuclease subunit SLX4 (818 aa).

Disordered regions lie at residues 1–39, 53–151, 279–324, 413–437, and 587–712; these read MSFLNSSRRRTRSPSPGQIFAPSATPIVIDSSPSVPSAS, RDPY…SSSN, FSEG…HQDS, NAQFPRKNSRPQKTRSPCSNPKTSK, and MLPA…MASE. A compositionally biased stretch (low complexity) spans 28–39; the sequence is VIDSSPSVPSAS. The span at 90-103 shows a compositional bias: basic and acidic residues; it reads PSERTKDAHGKDRF. Over residues 306-316 the composition is skewed to low complexity; the sequence is TTSTTITSLST. Positions 426 to 437 are enriched in polar residues; that stretch reads TRSPCSNPKTSK. The segment covering 604–618 has biased composition (basic and acidic residues); it reads QMSKRDTIKSRDIRA. 3 stretches are compositionally biased toward polar residues: residues 621–640, 652–672, and 696–712; these read SRSNSNHIPGLVSSTSQNTG, SSKSNDIGTTQGSPLLTTQSV, and SLASNTPSSSTRTMASE.

Belongs to the SLX4 family. Forms a heterodimer with SLX1. Phosphorylated in response to DNA damage.

Its subcellular location is the nucleus. Functionally, regulatory subunit of the SLX1-SLX4 structure-specific endonuclease that resolves DNA secondary structures generated during DNA repair and recombination. Has endonuclease activity towards branched DNA substrates, introducing single-strand cuts in duplex DNA close to junctions with ss-DNA. This Uncinocarpus reesii (strain UAMH 1704) protein is Structure-specific endonuclease subunit SLX4.